The following is a 397-amino-acid chain: Elongation factor Tu (397 aa).

The tr-type G domain maps to 10–206 (KPHVNIGTIG…ACDDYIPEPV (197 aa)). Residues 19-26 (GHIDHGKT) form a G1 region. GTP is bound at residue 19 to 26 (GHIDHGKT). Threonine 26 lines the Mg(2+) pocket. A G2 region spans residues 62-66 (GITIS). The tract at residues 83 to 86 (DCPG) is G3. Residues 83–87 (DCPGH) and 138–141 (NKAD) contribute to the GTP site. A G4 region spans residues 138-141 (NKAD). The tract at residues 176-178 (SAL) is G5.

It belongs to the TRAFAC class translation factor GTPase superfamily. Classic translation factor GTPase family. EF-Tu/EF-1A subfamily. Monomer.

It localises to the cytoplasm. It catalyses the reaction GTP + H2O = GDP + phosphate + H(+). Functionally, GTP hydrolase that promotes the GTP-dependent binding of aminoacyl-tRNA to the A-site of ribosomes during protein biosynthesis. This chain is Elongation factor Tu, found in Acidothermus cellulolyticus (strain ATCC 43068 / DSM 8971 / 11B).